We begin with the raw amino-acid sequence, 165 residues long: Cyclic pyranopterin monophosphate synthase (165 aa).

Substrate is bound by residues 83–85 (FCH) and 120–121 (ME). Asp135 is a catalytic residue.

The protein belongs to the MoaC family. In terms of assembly, homohexamer; trimer of dimers.

The enzyme catalyses (8S)-3',8-cyclo-7,8-dihydroguanosine 5'-triphosphate = cyclic pyranopterin phosphate + diphosphate. The protein operates within cofactor biosynthesis; molybdopterin biosynthesis. Functionally, catalyzes the conversion of (8S)-3',8-cyclo-7,8-dihydroguanosine 5'-triphosphate to cyclic pyranopterin monophosphate (cPMP). The protein is Cyclic pyranopterin monophosphate synthase of Xanthomonas campestris pv. campestris (strain 8004).